The sequence spans 474 residues: Trehalose-6-phosphate synthase (474 aa).

Arg10 serves as a coordination point for D-glucose 6-phosphate. 22–23 (GG) provides a ligand contact to UDP-alpha-D-glucose. 2 residues coordinate D-glucose 6-phosphate: Tyr77 and Asp131. The UDP-alpha-D-glucose site is built by Arg263 and Lys268. Arg301 contributes to the D-glucose 6-phosphate binding site. UDP-alpha-D-glucose is bound by residues Phe340 and 366–370 (LVAKE).

It belongs to the glycosyltransferase 20 family. Homotetramer.

It carries out the reaction D-glucose 6-phosphate + UDP-alpha-D-glucose = alpha,alpha-trehalose 6-phosphate + UDP + H(+). It functions in the pathway glycan biosynthesis; trehalose biosynthesis. Functionally, probably involved in the osmoprotection via the biosynthesis of trehalose. Catalyzes the transfer of glucose from UDP-alpha-D-glucose (UDP-Glc) to D-glucose 6-phosphate (Glc-6-P) to form trehalose-6-phosphate. Acts with retention of the anomeric configuration of the UDP-sugar donor. The chain is Trehalose-6-phosphate synthase from Enterobacter sp. (strain 638).